The primary structure comprises 95 residues: Small ribosomal subunit protein bS6 (95 aa).

It belongs to the bacterial ribosomal protein bS6 family.

Functionally, binds together with bS18 to 16S ribosomal RNA. This Exiguobacterium sp. (strain ATCC BAA-1283 / AT1b) protein is Small ribosomal subunit protein bS6.